A 336-amino-acid chain; its full sequence is NADH-quinone oxidoreductase subunit H (336 aa).

8 helical membrane-spanning segments follow: residues 4–24, 75–95, 108–128, 154–174, 181–201, 233–253, 272–292, and 308–328; these read YILW…LVVA, YLFF…WAVI, LGLL…VIAG, MGFA…TGII, IWHW…IAGI, LFFL…SIMF, FVPG…MFLW, and LGWK…ACMV.

This sequence belongs to the complex I subunit 1 family. In terms of assembly, NDH-1 is composed of 14 different subunits. Subunits NuoA, H, J, K, L, M, N constitute the membrane sector of the complex.

The protein resides in the cell inner membrane. It carries out the reaction a quinone + NADH + 5 H(+)(in) = a quinol + NAD(+) + 4 H(+)(out). NDH-1 shuttles electrons from NADH, via FMN and iron-sulfur (Fe-S) centers, to quinones in the respiratory chain. The immediate electron acceptor for the enzyme in this species is believed to be ubiquinone. Couples the redox reaction to proton translocation (for every two electrons transferred, four hydrogen ions are translocated across the cytoplasmic membrane), and thus conserves the redox energy in a proton gradient. This subunit may bind ubiquinone. The sequence is that of NADH-quinone oxidoreductase subunit H from Francisella tularensis subsp. mediasiatica (strain FSC147).